The chain runs to 311 residues: Probable manganese-dependent inorganic pyrophosphatase (311 aa).

The Mn(2+) site is built by histidine 9, aspartate 13, aspartate 15, aspartate 77, histidine 99, and aspartate 151.

Belongs to the PPase class C family. Mn(2+) serves as cofactor.

The protein resides in the cytoplasm. The catalysed reaction is diphosphate + H2O = 2 phosphate + H(+). The chain is Probable manganese-dependent inorganic pyrophosphatase from Streptococcus pneumoniae (strain JJA).